The primary structure comprises 201 residues: tRNA (guanine-N(7)-)-methyltransferase (201 aa).

S-adenosyl-L-methionine-binding residues include glutamate 34, glutamate 59, aspartate 86, and aspartate 107. Aspartate 107 is an active-site residue. Residues lysine 111, aspartate 143, and 181–184 (TDYE) each bind substrate.

This sequence belongs to the class I-like SAM-binding methyltransferase superfamily. TrmB family.

It carries out the reaction guanosine(46) in tRNA + S-adenosyl-L-methionine = N(7)-methylguanosine(46) in tRNA + S-adenosyl-L-homocysteine. It functions in the pathway tRNA modification; N(7)-methylguanine-tRNA biosynthesis. Functionally, catalyzes the formation of N(7)-methylguanine at position 46 (m7G46) in tRNA. This is tRNA (guanine-N(7)-)-methyltransferase from Mycoplasma mobile (strain ATCC 43663 / 163K / NCTC 11711) (Mesomycoplasma mobile).